The following is a 314-amino-acid chain: Ribosome production factor 2 homolog (314 aa).

The Brix domain occupies 28–238; that stretch reads KKTLILHGTK…IRRNRLPNDS (211 aa). Residues 238–314 are disordered; it reads SLMKEAMRTS…VAKKMKVSSE (77 aa). Composition is skewed to basic and acidic residues over residues 239 to 249 and 275 to 314; these read LMKEAMRTSKD and QKLKEMKLFDKSKGSKRERKDAKLKHKEETVAKKMKVSSE.

Belongs to the RPF2 family.

The protein localises to the nucleus. It is found in the nucleolus. This Arabidopsis thaliana (Mouse-ear cress) protein is Ribosome production factor 2 homolog.